Reading from the N-terminus, the 314-residue chain is Transmembrane protein 178B (314 aa).

The signal sequence occupies residues 1-24 (MRLLAGAGLCLALAALALLAVALS). The interval 32–83 (DARRHRDRCRKPGGKRNDPGYMYTPGQHLPLRGEPPSSRIRSPRGGEPGGVR) is disordered. Positions 36–45 (HRDRCRKPGG) are enriched in basic residues. Transmembrane regions (helical) follow at residues 194-214 (AGFI…GVLG), 228-248 (LLFL…VAGI), and 274-294 (MFCA…CTLA).

The protein belongs to the TMEM178 family.

The protein resides in the membrane. In Xenopus tropicalis (Western clawed frog), this protein is Transmembrane protein 178B (tmem178b).